We begin with the raw amino-acid sequence, 156 residues long: Ribosome maturation factor RimP (156 aa).

Belongs to the RimP family.

The protein resides in the cytoplasm. In terms of biological role, required for maturation of 30S ribosomal subunits. In Dictyoglomus thermophilum (strain ATCC 35947 / DSM 3960 / H-6-12), this protein is Ribosome maturation factor RimP.